We begin with the raw amino-acid sequence, 427 residues long: Glutamate-1-semialdehyde 2,1-aminomutase (427 aa).

Lysine 264 bears the N6-(pyridoxal phosphate)lysine mark.

It belongs to the class-III pyridoxal-phosphate-dependent aminotransferase family. HemL subfamily. As to quaternary structure, homodimer. Requires pyridoxal 5'-phosphate as cofactor.

It localises to the cytoplasm. The enzyme catalyses (S)-4-amino-5-oxopentanoate = 5-aminolevulinate. Its pathway is porphyrin-containing compound metabolism; protoporphyrin-IX biosynthesis; 5-aminolevulinate from L-glutamyl-tRNA(Glu): step 2/2. The polypeptide is Glutamate-1-semialdehyde 2,1-aminomutase (Clostridium botulinum (strain Alaska E43 / Type E3)).